The primary structure comprises 122 residues: Large ribosomal subunit protein bL17 (122 aa).

The protein belongs to the bacterial ribosomal protein bL17 family. As to quaternary structure, part of the 50S ribosomal subunit. Contacts protein L32.

The protein is Large ribosomal subunit protein bL17 of Staphylococcus epidermidis (strain ATCC 35984 / DSM 28319 / BCRC 17069 / CCUG 31568 / BM 3577 / RP62A).